Here is a 389-residue protein sequence, read N- to C-terminus: Probable nitrate transporter NarT (389 aa).

Transmembrane regions (helical) follow at residues 14–34, 45–65, 69–89, 97–117, 139–159, 161–181, 211–231, 246–266, 268–288, 294–314, 331–351, and 353–373; these read TLSL…MPFI, ISII…PFGY, IVGA…PIFF, GMLM…SVGV, GNIG…IIGW, TTVR…FIFG, WYFI…NYLV, GVFI…GDKF, AVKV…ILGI, LFTV…GLIF, IVSM…TYVA, and LTGS…IALF.

It belongs to the major facilitator superfamily. Nitrate/nitrite porter (TC 2.A.1.8) family.

It localises to the cell membrane. In terms of biological role, probably required for nitrate uptake under anoxic conditions. Also possibly involved in excretion of nitrite produced by the dissimilatory reduction of nitrate. This Staphylococcus aureus (strain MRSA252) protein is Probable nitrate transporter NarT (narT).